A 377-amino-acid chain; its full sequence is Alanine racemase (377 aa).

Lys37 acts as the Proton acceptor; specific for D-alanine in catalysis. The residue at position 37 (Lys37) is an N6-(pyridoxal phosphate)lysine. Substrate is bound at residue Arg135. Tyr271 (proton acceptor; specific for L-alanine) is an active-site residue. Position 319 (Met319) interacts with substrate.

The protein belongs to the alanine racemase family. It depends on pyridoxal 5'-phosphate as a cofactor.

The enzyme catalyses L-alanine = D-alanine. The protein operates within amino-acid biosynthesis; D-alanine biosynthesis; D-alanine from L-alanine: step 1/1. Functionally, catalyzes the interconversion of L-alanine and D-alanine. May also act on other amino acids. This is Alanine racemase (alr) from Helicobacter pylori (strain HPAG1).